The following is a 236-amino-acid chain: Factor V activator RVV-V alpha (236 aa).

One can recognise a Peptidase S1 domain in the interval 1 to 227; sequence VVGGDECNIN…YNNWIQNIIA (227 aa). 6 cysteine pairs are disulfide-bonded: Cys7–Cys141, Cys28–Cys44, Cys76–Cys234, Cys120–Cys188, Cys152–Cys167, and Cys178–Cys203. Catalysis depends on charge relay system residues His43 and Asp88. Ser182 acts as the Charge relay system in catalysis. Asn229 carries N-linked (GlcNAc...) asparagine glycosylation.

The protein belongs to the peptidase S1 family. Snake venom subfamily. In terms of assembly, monomer. As to expression, expressed by the venom gland.

It is found in the secreted. It catalyses the reaction Fully activates human clotting factor V by a single cleavage at the 1545-Trp-Tyr-Leu-Arg-|-Ser-Asn-Asn-Gly-1552 bond. Cattle, but not rabbit, factor V is cleaved, and no other proteins of the clotting system are attacked. Esterase activity is observed on Bz-Arg-OEt and Tos-Arg-OMe, and amidase activity on Phe-pipecolyl-Arg-NHPhNO2.. Inhibited by D-Phe-Pro-Arg-chloromethyl ketone (FPRCK) (97%), PMSF (76%), and benzamidine (50%). Is not inhibited by BPTI, antithrombin and EDTA. In terms of biological role, venom serine protease that activates factor V (F5) in a calcium-independent manner. It cleaves the Arg(1545)-Ser(1546) linkage in the human factor V molecule. Induces the coagulation of mammalian plasma. The polypeptide is Factor V activator RVV-V alpha (Daboia siamensis (Eastern Russel's viper)).